A 377-amino-acid chain; its full sequence is Proteinase-activated receptor 3 (377 aa).

The first 19 residues, 1–19, serve as a signal peptide directing secretion; that stretch reads MRAAIFAAIGALLLSPASC. Residues 20 to 38 constitute a propeptide, removed for receptor activation; it reads QSGMEYDADNLAKPTLSIK. Residues 39–94 lie on the Extracellular side of the membrane; that stretch reads TFRGAPQNSFEEFPLSAIEGWTGTTKTVKIKCPEELDSNLHVNNATMGYLSSPLST. Asn-82 carries an N-linked (GlcNAc...) asparagine glycan. A helical membrane pass occupies residues 95–120; it reads KLIPAIYILVFAVGMPANAVTLWMLF. Topologically, residues 121–127 are cytoplasmic; sequence RTRTIRM. Residues 128-147 traverse the membrane as a helical segment; that stretch reads TIFYTNLAIADFLFCVTLPF. The Extracellular segment spans residues 148–166; that stretch reads RIAYHLNGNNWVFGEVMCR. Cys-165 and Cys-244 are joined by a disulfide. The chain crosses the membrane as a helical span at residues 167–188; it reads ATTVIFYGNMYCSILLLACISI. The Cytoplasmic portion of the chain corresponds to 189–205; it reads NRYLAIVHPFTYRGLPK. Residues 206 to 229 form a helical membrane-spanning segment; the sequence is RTYALLTCGLVWTTVFLYMLPFFI. At 230 to 259 the chain is on the extracellular side; the sequence is LKQEYYLVQQDITTCHDVHNTCESSSPFQL. Residues 260–279 traverse the membrane as a helical segment; that stretch reads YYFISLAFFGFLIPFLVIIY. The Cytoplasmic segment spans residues 280–296; sequence CYTAIIWTLNAKDRRWL. Residues 297-321 form a helical membrane-spanning segment; that stretch reads WYIKASLLTFVIFTICFAPSNIILI. At 322–335 the chain is on the extracellular side; the sequence is IHHANYYYSNTDAL. The chain crosses the membrane as a helical span at residues 336–360; the sequence is YFVYLIALCLGSLNSCLDPFLYFLM. The Cytoplasmic segment spans residues 361-377; that stretch reads SKITDHSTAYLTMVKLS.

Belongs to the G-protein coupled receptor 1 family. Interacts with INSC/inscuteable and GPSM2. Post-translationally, a proteolytic cleavage generates a new N-terminus that functions as a tethered ligand.

It is found in the cell membrane. Functionally, receptor for activated thrombin coupled to G proteins that stimulate phosphoinositide hydrolysis. In Bos taurus (Bovine), this protein is Proteinase-activated receptor 3 (F2RL2).